A 320-amino-acid chain; its full sequence is MGADIYRDVLYIFYPIFFIFSTITQLMLIYLIFYHSPTHLKMLKVFLLNTSLFQIILVVVSCSSQFRMITTAIPIELRSYGLLRYLEAWLGYTMYQVLQTSAFMSGMSILITFVFKYELVRQIEFSKSRVTGIILLFHMPIIASMVMEVIMVINQSLPNEIREQYKFLNANAEEYSIVGALSLKTVPSLINFLLISGSVVASPFISFFFREKILRRINSQFYQHSKWKKSQIQVFVKGLTIQAFLPLIFYVPVFGLYFYCILTHTEILFQQYFMTVVPCLPAFFDPMLTLYFVTPYRRRLKIWMRIEKESKVLPVTSLVK.

The next 7 helical transmembrane spans lie at 12 to 32, 42 to 62, 95 to 115, 133 to 153, 189 to 209, 243 to 263, and 273 to 293; these read IFYP…IYLI, MLKV…VVSC, YQVL…TFVF, IILL…IMVI, LINF…SFFF, AFLP…CILT, and FMTV…LYFV.

This sequence belongs to the nematode receptor-like protein srd family.

The protein resides in the membrane. This Caenorhabditis elegans protein is Serpentine receptor class delta-40 (srd-40).